Reading from the N-terminus, the 486-residue chain is Replication factor C large subunit (486 aa).

Residue 46 to 53 (GPPGSGKT) coordinates ATP. Positions 419 to 486 (VKKETPKKTE…KKQATLDSFF (68 aa)) are disordered. 2 stretches are compositionally biased toward basic and acidic residues: residues 420–432 (KKETPKKTEKPKE) and 442–480 (RISEPPKEPLKEVIEETLEKSVEKADTKEEKKKDPKKQA).

Belongs to the activator 1 small subunits family. RfcL subfamily. In terms of assembly, heteromultimer composed of small subunits (RfcS) and large subunits (RfcL).

Its function is as follows. Part of the RFC clamp loader complex which loads the PCNA sliding clamp onto DNA. The protein is Replication factor C large subunit of Methanococcus maripaludis (strain DSM 14266 / JCM 13030 / NBRC 101832 / S2 / LL).